The following is a 350-amino-acid chain: Holliday junction branch migration complex subunit RuvB (350 aa).

The tract at residues 1–20 (MIEADRLITASPREREEQQD) is disordered. The interval 4–184 (ADRLITASPR…FGIVQRLEFY (181 aa)) is large ATPase domain (RuvB-L). ATP contacts are provided by residues isoleucine 23, arginine 24, glycine 65, lysine 68, threonine 69, threonine 70, 131–133 (EDF), arginine 174, tyrosine 184, and arginine 221. Threonine 69 is a Mg(2+) binding site. Positions 185–255 (GIDDLATIVT…IADQALNLLD (71 aa)) are small ATPAse domain (RuvB-S). The head domain (RuvB-H) stretch occupies residues 258–350 (ERGFDHSDRR…SGDLFAVSDE (93 aa)). DNA is bound by residues arginine 294, arginine 313, and arginine 318.

The protein belongs to the RuvB family. In terms of assembly, homohexamer. Forms an RuvA(8)-RuvB(12)-Holliday junction (HJ) complex. HJ DNA is sandwiched between 2 RuvA tetramers; dsDNA enters through RuvA and exits via RuvB. An RuvB hexamer assembles on each DNA strand where it exits the tetramer. Each RuvB hexamer is contacted by two RuvA subunits (via domain III) on 2 adjacent RuvB subunits; this complex drives branch migration. In the full resolvosome a probable DNA-RuvA(4)-RuvB(12)-RuvC(2) complex forms which resolves the HJ.

The protein resides in the cytoplasm. The catalysed reaction is ATP + H2O = ADP + phosphate + H(+). Its function is as follows. The RuvA-RuvB-RuvC complex processes Holliday junction (HJ) DNA during genetic recombination and DNA repair, while the RuvA-RuvB complex plays an important role in the rescue of blocked DNA replication forks via replication fork reversal (RFR). RuvA specifically binds to HJ cruciform DNA, conferring on it an open structure. The RuvB hexamer acts as an ATP-dependent pump, pulling dsDNA into and through the RuvAB complex. RuvB forms 2 homohexamers on either side of HJ DNA bound by 1 or 2 RuvA tetramers; 4 subunits per hexamer contact DNA at a time. Coordinated motions by a converter formed by DNA-disengaged RuvB subunits stimulates ATP hydrolysis and nucleotide exchange. Immobilization of the converter enables RuvB to convert the ATP-contained energy into a lever motion, pulling 2 nucleotides of DNA out of the RuvA tetramer per ATP hydrolyzed, thus driving DNA branch migration. The RuvB motors rotate together with the DNA substrate, which together with the progressing nucleotide cycle form the mechanistic basis for DNA recombination by continuous HJ branch migration. Branch migration allows RuvC to scan DNA until it finds its consensus sequence, where it cleaves and resolves cruciform DNA. The polypeptide is Holliday junction branch migration complex subunit RuvB (Ectopseudomonas mendocina (strain ymp) (Pseudomonas mendocina)).